Here is a 133-residue protein sequence, read N- to C-terminus: Histone H2A.1 (133 aa).

The interval 1-23 is disordered; sequence MSTTGKGGKAKGKTASSKQVSRS. Ser-2 is modified (N-acetylserine). N6-acetyllysine occurs at positions 6, 9, 11, 13, and 18. Ser-123 is subject to Phosphoserine. Residue Lys-124 forms a Glycyl lysine isopeptide (Lys-Gly) (interchain with G-Cter in ubiquitin) linkage.

This sequence belongs to the histone H2A family. In terms of assembly, the nucleosome is a histone octamer containing two molecules each of H2A, H2B, H3 and H4 assembled in one H3-H4 heterotetramer and two H2A-H2B heterodimers. The octamer wraps approximately 147 bp of DNA. In terms of processing, monoubiquitination of Lys-124 gives a specific tag for epigenetic transcriptional repression. Post-translationally, acetylation occurs almost exclusively in the MAC.

It localises to the nucleus. The protein localises to the chromosome. In terms of biological role, core component of nucleosome. Nucleosomes wrap and compact DNA into chromatin, limiting DNA accessibility to the cellular machineries which require DNA as a template. Histones thereby play a central role in transcription regulation, DNA repair, DNA replication and chromosomal stability. DNA accessibility is regulated via a complex set of post-translational modifications of histones, also called histone code, and nucleosome remodeling. The polypeptide is Histone H2A.1 (HTA2) (Tetrahymena thermophila (strain SB210)).